The primary structure comprises 198 residues: V-type ATP synthase subunit E 1 (198 aa).

The protein belongs to the V-ATPase E subunit family.

In terms of biological role, produces ATP from ADP in the presence of a proton gradient across the membrane. This is V-type ATP synthase subunit E 1 from Clostridium tetani (strain Massachusetts / E88).